A 206-amino-acid chain; its full sequence is Flavin reductase (NADPH) (206 aa).

Positions 10, 12, 13, 14, 15, 35, 38, and 39 each coordinate NADP(+). Residue Ser42 is modified to Phosphoserine. Asp54, Val55, Leu75, Gly76, and Arg78 together coordinate NADP(+). Ser82 carries the post-translational modification Phosphoserine. Residues Met87, Cys109, His132, His153, and Ile154 each coordinate NADP(+). The active-site S-nitroso-cysteine intermediate; for S-nitroso-CoA-dependent nitrosyltransferase activity is the Cys109. Residue Cys188 is the S-nitroso-cysteine intermediate; for S-nitroso-CoA-dependent nitrosyltransferase activity of the active site.

In terms of assembly, monomer. As to expression, at least expressed in the liver and erythrocyte.

It localises to the cytoplasm. It catalyses the reaction reduced riboflavin + NADP(+) = riboflavin + NADPH + 2 H(+). The enzyme catalyses bilirubin IXbeta + NADP(+) = biliverdin IXbeta + NADPH + H(+). The catalysed reaction is FMNH2 + NAD(+) = FMN + NADH + 2 H(+). It carries out the reaction FMNH2 + NADP(+) = FMN + NADPH + 2 H(+). It catalyses the reaction S-nitroso-CoA + L-cysteinyl-[protein] = S-nitroso-L-cysteinyl-[protein] + CoA. The enzyme catalyses L-cysteinyl-[SCAN] + S-nitroso-CoA = S-nitroso-L-cysteinyl-[SCAN] + CoA. The catalysed reaction is S-nitroso-L-cysteinyl-[SCAN] + L-cysteinyl-[protein] = L-cysteinyl-[SCAN] + S-nitroso-L-cysteinyl-[protein]. Enzyme that can both act as a NAD(P)H-dependent reductase and a S-nitroso-CoA-dependent nitrosyltransferase. Promotes fetal heme degradation during development. Also expressed in adult tissues, where it acts as a regulator of hematopoiesis, intermediary metabolism (glutaminolysis, glycolysis, TCA cycle and pentose phosphate pathway) and insulin signaling. Has a broad specificity oxidoreductase activity by catalyzing the NAD(P)H-dependent reduction of a variety of flavins, such as riboflavin, FAD or FMN, biliverdins, methemoglobin and PQQ (pyrroloquinoline quinone). Contributes to fetal heme catabolism by catalyzing reduction of biliverdin IXbeta into bilirubin IXbeta in the liver. Biliverdin IXbeta, which constitutes the major heme catabolite in the fetus is not present in adult. Does not reduce bilirubin IXalpha. Can also reduce the complexed Fe(3+) iron to Fe(2+) in the presence of FMN and NADPH. Acts as a protein nitrosyltransferase by catalyzing nitrosylation of cysteine residues of target proteins, such as HMOX2, INSR and IRS1. S-nitroso-CoA-dependent nitrosyltransferase activity is mediated via a 'ping-pong' mechanism: BLVRB first associates with both S-nitroso-CoA and protein substrate, nitric oxide group is then transferred from S-nitroso-CoA to Cys-109 and Cys-188 residues of BLVRB and from S-nitroso-BLVRB to the protein substrate. Inhibits insulin signaling by mediating nitrosylation of INSR and IRS1, leading to their inhibition. The polypeptide is Flavin reductase (NADPH) (BLVRB) (Bos taurus (Bovine)).